The primary structure comprises 344 residues: MIEIKSVNKVFYQGDKQIHALKDINLFIPQGTIFGVIGSSGAGKSTLIRCVNMLEKPTSGQVIVDGVDLTTLSNPQLCAARRNIGMIFQHFNLLSSRTVFENVALPLELAGQSQQHIETKVTELLALVGLSEKRESYPANLSGGQKQRVAIARALASDPKVLLCDEATSALDPATTQSILELLKEINRQLNLTILLITHEMDVVKSICHEVAIIGGGELVEKGTVGDIFAHPKTELAHQFIRSTLDLSIPEDYQVRLQPTRVAGSYPLVRLEFTGATVDAPLMTQIARKYNIDVSILSSDLDYAGGVKFGMMVAEIFGNADDDEAAIRYLRENNVKVEVLGYVL.

One can recognise an ABC transporter domain in the interval 2 to 241; the sequence is IEIKSVNKVF…PKTELAHQFI (240 aa). Residue 38-45 participates in ATP binding; the sequence is GSSGAGKS.

The protein belongs to the ABC transporter superfamily. Methionine importer (TC 3.A.1.24) family. The complex is composed of two ATP-binding proteins (MetN), two transmembrane proteins (MetI) and a solute-binding protein (MetQ).

Its subcellular location is the cell inner membrane. The catalysed reaction is L-methionine(out) + ATP + H2O = L-methionine(in) + ADP + phosphate + H(+). It carries out the reaction D-methionine(out) + ATP + H2O = D-methionine(in) + ADP + phosphate + H(+). Functionally, part of the ABC transporter complex MetNIQ involved in methionine import. Responsible for energy coupling to the transport system. The polypeptide is Methionine import ATP-binding protein MetN (Vibrio cholerae serotype O1 (strain ATCC 39315 / El Tor Inaba N16961)).